The primary structure comprises 322 residues: Cytochrome c biogenesis protein CcsA (322 aa).

Transmembrane regions (helical) follow at residues 19 to 39 (NAIF…LIIV), 43 to 63 (LICN…FFYL), 72 to 92 (FFPL…LLFI), 104 to 124 (VIGA…SLSL), 150 to 170 (MMLS…YLVL), 230 to 250 (TIGI…VWAN), 264 to 281 (TWAL…HARL), and 291 to 311 (AFLG…VNFL).

The protein belongs to the CcmF/CycK/Ccl1/NrfE/CcsA family. As to quaternary structure, may interact with Ccs1.

Its subcellular location is the plastid. It is found in the chloroplast thylakoid membrane. Functionally, required during biogenesis of c-type cytochromes (cytochrome c6 and cytochrome f) at the step of heme attachment. The polypeptide is Cytochrome c biogenesis protein CcsA (Heterosigma akashiwo (strain NIES-293 / 8280G21-1)).